We begin with the raw amino-acid sequence, 405 residues long: Arginine biosynthesis bifunctional protein ArgJ (405 aa).

Residues Thr152, Lys178, Thr189, Glu276, Asn400, and Thr405 each contribute to the substrate site. The active-site Nucleophile is the Thr189.

The protein belongs to the ArgJ family. In terms of assembly, heterotetramer of two alpha and two beta chains.

The protein resides in the cytoplasm. It carries out the reaction N(2)-acetyl-L-ornithine + L-glutamate = N-acetyl-L-glutamate + L-ornithine. It catalyses the reaction L-glutamate + acetyl-CoA = N-acetyl-L-glutamate + CoA + H(+). The protein operates within amino-acid biosynthesis; L-arginine biosynthesis; L-ornithine and N-acetyl-L-glutamate from L-glutamate and N(2)-acetyl-L-ornithine (cyclic): step 1/1. It functions in the pathway amino-acid biosynthesis; L-arginine biosynthesis; N(2)-acetyl-L-ornithine from L-glutamate: step 1/4. Catalyzes two activities which are involved in the cyclic version of arginine biosynthesis: the synthesis of N-acetylglutamate from glutamate and acetyl-CoA as the acetyl donor, and of ornithine by transacetylation between N(2)-acetylornithine and glutamate. The protein is Arginine biosynthesis bifunctional protein ArgJ of Pseudomonas syringae pv. tomato (strain ATCC BAA-871 / DC3000).